Reading from the N-terminus, the 783-residue chain is Cation/H(+) antiporter 11 (783 aa).

Helical transmembrane passes span 31–51 (VVFG…FFCI), 61–81 (IGVS…PQLF), 101–120 (AALR…LMTV), 135–155 (VVIG…LNLF), 175–195 (VIVI…LLEL), 205–225 (LALS…IVAT), 244–264 (AVII…QWII), 276–295 (IYIH…FVFF), 300–322 (VLGP…ALEA), 360–380 (IFLT…LCLY), 389–409 (LAVS…YEAV), and 418–438 (ATYA…PMVV).

It belongs to the monovalent cation:proton antiporter 2 (CPA2) transporter (TC 2.A.37) family. CHX (TC 2.A.37.4) subfamily. As to expression, specifically expressed in pollen.

It localises to the membrane. Its function is as follows. May operate as a cation/H(+) antiporter. The protein is Cation/H(+) antiporter 11 (CHX11) of Arabidopsis thaliana (Mouse-ear cress).